The primary structure comprises 359 residues: Fructose-bisphosphate aldolase (359 aa).

Ser-50 is a D-glyceraldehyde 3-phosphate binding site. The active-site Proton donor is the Asp-83. Residues His-84, Asp-105, Glu-142, and His-198 each contribute to the Zn(2+) site. Residue Gly-199 coordinates dihydroxyacetone phosphate. His-232 lines the Zn(2+) pocket. Dihydroxyacetone phosphate is bound by residues 233 to 235 (GSS) and 275 to 278 (NIDT).

This sequence belongs to the class II fructose-bisphosphate aldolase family. Homodimer. Requires Zn(2+) as cofactor.

It carries out the reaction beta-D-fructose 1,6-bisphosphate = D-glyceraldehyde 3-phosphate + dihydroxyacetone phosphate. Its pathway is carbohydrate biosynthesis; Calvin cycle. The protein operates within carbohydrate degradation; glycolysis; D-glyceraldehyde 3-phosphate and glycerone phosphate from D-glucose: step 4/4. Catalyzes the aldol condensation of dihydroxyacetone phosphate (DHAP or glycerone-phosphate) with glyceraldehyde 3-phosphate (G3P) to form fructose 1,6-bisphosphate (FBP) in gluconeogenesis and the reverse reaction in glycolysis. In Rhizobium meliloti (strain 1021) (Ensifer meliloti), this protein is Fructose-bisphosphate aldolase (cbbA).